Reading from the N-terminus, the 356-residue chain is Arginine kinase Lit v 2 (356 aa).

Residues 9-91 form the Phosphagen kinase N-terminal domain; sequence KLEAGFKKLE…FDPIIEDYHV (83 aa). Residue 64-68 coordinates L-arginine; the sequence is GVGIY. The Phosphagen kinase C-terminal domain occupies 119 to 356; sequence FVISTRVRCG…LELIKMEKEM (238 aa). Residues 122–126 and His185 contribute to the ATP site; that span reads STRVR. Glu225 contacts L-arginine. An ATP-binding site is contributed by Arg229. Cys271 contributes to the L-arginine binding site. Residues 280-284 and 309-314 contribute to the ATP site; these read RASVH and RGTRGE. Glu314 contacts L-arginine.

The protein belongs to the ATP:guanido phosphotransferase family. Expressed in muscle (at protein level). Expressed in muscle, heart, nerve, stomach and hemocytes, with the highest expression in muscle. Very low expression in eyestalk and intestine. Not expressed in hepatopancreas, gill and skin.

The enzyme catalyses L-arginine + ATP = N(omega)-phospho-L-arginine + ADP + H(+). With respect to regulation, no change in activity after supplementation with 10 mM glucose. However, activity decreases significantly when glucose concentration is higher than 50 mM and almost all activity is lost with 200 mM glucose. Activity is significantly increased after treatment with 10 mM and 50 mM ATP. However, activity drops significantly with 200 mM ATP. Inhibited by 10-200 mM alpha-ketoglutarate. No change in activity after incubation with 10-200 mM L-citrulline, L-ornaline or glycerol. In terms of biological role, catalyzes the reversible transfer of high energy ATP gamma-phosphate group to L-arginine. This is Arginine kinase Lit v 2 from Penaeus vannamei (Whiteleg shrimp).